Reading from the N-terminus, the 618-residue chain is Leucine aminopeptidase 2 (618 aa).

A peptide contacts are provided by residues 139 to 141 and 271 to 276; these read QCQ and PYGGME. Position 300 (H300) interacts with Zn(2+). E301 serves as the catalytic Proton acceptor. Zn(2+)-binding residues include H304 and E323. The active-site Proton donor is Y388.

The protein belongs to the peptidase M1 family. Requires Zn(2+) as cofactor.

It is found in the cytoplasm. It localises to the nucleus. The catalysed reaction is an epoxide + H2O = an ethanediol. Aminopeptidase that preferentially cleaves di- and tripeptides. Also has low epoxide hydrolase activity (in vitro). Can hydrolyze the epoxide leukotriene LTA(4) but it forms preferentially 5,6-dihydroxy-7,9,11,14-eicosatetraenoic acid rather than the cytokine leukotriene B(4) as the product compared to the homologous mammalian enzyme (in vitro). The sequence is that of Leucine aminopeptidase 2 from Aspergillus niger (strain ATCC MYA-4892 / CBS 513.88 / FGSC A1513).